A 211-amino-acid chain; its full sequence is SAGA-associated factor 11 homolog 2 (211 aa).

An SGF11-type zinc finger spans residues 115 to 136; it reads CTCPNCDRLVAAARFAPHLEKC. The interval 149–211 is disordered; the sequence is RRLATKEGSS…GSKKNNGKTF (63 aa). A compositionally biased stretch (low complexity) spans 157–166; it reads SSASTSSTST. Serine 187 bears the Phosphoserine mark. The segment covering 197–211 has biased composition (low complexity); it reads SSRNNGSKKNNGKTF.

Belongs to the SGF11 family. As to quaternary structure, component of some SAGA transcription coactivator-HAT complexes, at least composed of Ada2b, not/nonstop, Pcaf/Gcn5, Sgf11 and Spt3. Within the SAGA complex, Sgf11, e(y)2, and not/nonstop form an additional subcomplex of SAGA called the DUB module (deubiquitination module). Interacts directly with not/nonstop. Interacts with the AMEX complex component xmas-2. Interacts with Cbp80; important for promoter recruitment of Sgf11 that is not associated with the DUB module.

Its subcellular location is the nucleus. The protein localises to the nucleoplasm. The protein resides in the cytoplasm. Component of the transcription regulatory histone acetylation (HAT) complex SAGA, a multiprotein complex that activates transcription by remodeling chromatin and mediating histone acetylation and deubiquitination. Within the SAGA complex, participates in a subcomplex that specifically deubiquitinates histone H2B. The SAGA complex is recruited to specific gene promoters by activators, where it is required for transcription. Required for nuclear receptor-mediated transactivation. Binds independently on SAGA to promoters in an RNA-dependent manner. Binds to mRNA and is essential for total mRNA export from the nucleus. Required to counteract heterochromatin silencing. Controls the development of neuronal connectivity in visual system by being required for accurate axon targeting in the optic lobe. Required for expression of ecdysone-induced genes such as br/broad. The polypeptide is SAGA-associated factor 11 homolog 2 (Drosophila grimshawi (Hawaiian fruit fly)).